Here is a 304-residue protein sequence, read N- to C-terminus: MAEITAKMVAELRARTGAGMMDCKKALMETGGDFDKAVDWLREKGLAAAAKKAGRVAAEGRVHAIVEDGARHGVLVEVNCETDFVARGEAFINLCDHVARVILQARPASLEALQEALGDTVKEAVAKIGENIQVRRFERYEVADAGRVHAYIHGDGRVGVLIELTTATPEVAAHPEVEALCHELALQIASMRAQYVRPEDVPAQVIEHEREILKAQAINEGKKPEIAEKMVAGRIQKFFQEVCLLEQEWVKDSKKTVGALVKEVAGKVGGEITVKRFVRYEKGEGIEKRQDDFAEEVMRQAGLK.

The involved in Mg(2+) ion dislocation from EF-Tu stretch occupies residues 82–85 (TDFV).

This sequence belongs to the EF-Ts family.

The protein localises to the cytoplasm. In terms of biological role, associates with the EF-Tu.GDP complex and induces the exchange of GDP to GTP. It remains bound to the aminoacyl-tRNA.EF-Tu.GTP complex up to the GTP hydrolysis stage on the ribosome. The polypeptide is Elongation factor Ts (Symbiobacterium thermophilum (strain DSM 24528 / JCM 14929 / IAM 14863 / T)).